The following is a 65-amino-acid chain: Small ribosomal subunit protein eS27 (65 aa).

Residues Cys-20, Cys-23, Cys-39, and Cys-42 each coordinate Zn(2+). Residues 20-42 (CIDCGNEQIVFSHPATRVRCNVC) form a C4-type zinc finger.

Belongs to the eukaryotic ribosomal protein eS27 family. As to quaternary structure, part of the 30S ribosomal subunit. It depends on Zn(2+) as a cofactor.

The sequence is that of Small ribosomal subunit protein eS27 from Pyrococcus abyssi (strain GE5 / Orsay).